A 217-amino-acid chain; its full sequence is High frequency lysogenization protein HflD homolog (217 aa).

The protein belongs to the HflD family.

Its subcellular location is the cytoplasm. It is found in the cell membrane. The chain is High frequency lysogenization protein HflD homolog from Buchnera aphidicola subsp. Baizongia pistaciae (strain Bp).